The primary structure comprises 323 residues: Ribosomal protein L11 methyltransferase (323 aa).

S-adenosyl-L-methionine is bound by residues T160, G184, D206, and N257.

Belongs to the methyltransferase superfamily. PrmA family.

Its subcellular location is the cytoplasm. The catalysed reaction is L-lysyl-[protein] + 3 S-adenosyl-L-methionine = N(6),N(6),N(6)-trimethyl-L-lysyl-[protein] + 3 S-adenosyl-L-homocysteine + 3 H(+). Its function is as follows. Methylates ribosomal protein L11. The chain is Ribosomal protein L11 methyltransferase from Agathobacter rectalis (strain ATCC 33656 / DSM 3377 / JCM 17463 / KCTC 5835 / VPI 0990) (Eubacterium rectale).